Here is a 390-residue protein sequence, read N- to C-terminus: Trehalose-phosphate phosphatase (390 aa).

Asp-150 acts as the Nucleophile in catalysis. Mg(2+)-binding residues include Asp-150, Asp-152, and Asp-333. 150 to 152 (DFD) contacts substrate.

Belongs to the trehalose phosphatase family. Mg(2+) serves as cofactor.

The catalysed reaction is alpha,alpha-trehalose 6-phosphate + H2O = alpha,alpha-trehalose + phosphate. It functions in the pathway glycan biosynthesis; trehalose biosynthesis. Functionally, removes the phosphate from trehalose 6-phosphate to produce free trehalose. The protein is Trehalose-phosphate phosphatase (otsB) of Mycobacterium marinum (strain ATCC BAA-535 / M).